Reading from the N-terminus, the 315-residue chain is MSLCSPTHSAEMSLFLQGPEEMLPLSSEGSEMGSEKEQSPEPHLPEEGEGGKPWRVDDSEGSWIPPGEKEHGQESLSDELQETHPKKPWQKVTVRARELGDPIAHPRHEADEKPFICAQCGKTFNNTSNLRTHQRIHTGEKPYKCSECGKSFSRSSNRIRHERIHLEEKHYKCPKCQESFRRRSDLTTHQQDHLGKRPYRCDICGKSFSQSATLAVHHRTHLEPAPYICCECGKSFSNSSSFGVHHRTHTGERPYECTECGRTFSDISNFGAHQRTHRGEKPYRCTVCGKHFSRSSNLIRHQKTHLGEQAGKDSS.

Residues 1–10 (MSLCSPTHSA) are compositionally biased toward polar residues. Residues 1–90 (MSLCSPTHSA…QETHPKKPWQ (90 aa)) are disordered. Positions 33–58 (GSEKEQSPEPHLPEEGEGGKPWRVDD) are enriched in basic and acidic residues. Phosphoserine occurs at positions 39, 75, and 77. A Glycyl lysine isopeptide (Lys-Gly) (interchain with G-Cter in SUMO2) cross-link involves residue lysine 113. 7 C2H2-type zinc fingers span residues 115 to 137 (FICAQCGKTFNNTSNLRTHQRIH), 143 to 165 (YKCSECGKSFSRSSNRIRHERIH), 171 to 193 (YKCPKCQESFRRRSDLTTHQQDH), 199 to 221 (YRCDICGKSFSQSATLAVHHRTH), 227 to 249 (YICCECGKSFSNSSSFGVHHRTH), 255 to 277 (YECTECGRTFSDISNFGAHQRTH), and 283 to 305 (YRCTVCGKHFSRSSNLIRHQKTH).

It belongs to the krueppel C2H2-type zinc-finger protein family.

The protein localises to the nucleus. May be involved in transcriptional regulation. This Homo sapiens (Human) protein is Zinc finger protein 691 (ZNF691).